A 490-amino-acid chain; its full sequence is E3 ubiquitin-protein ligase Hakai (490 aa).

The tract at residues 34-60 (QANKAKPAPRTQRTINRMPAKAPPGDE) is disordered. The RING-type zinc finger occupies 108–148 (CDKCGLPIKIYGRMIPCKHVFCYDCAILHEKKGDKMCPGCS). The interval 147–205 (CSDPVQRIEQCTRGSLFMCSIVQGCKRTYLSQRDLQAHINHRHMRAGKPVTRASLENVH) is HYB domain. Residues 163–189 (FMCSIVQGCKRTYLSQRDLQAHINHRH) form a C2H2-type zinc finger. Phosphoserine occurs at positions 200, 284, and 289. Positions 254–490 (QPHEDIRAPP…DQTRYRPYYQ (237 aa)) are disordered. Pro residues-rich tracts occupy residues 341-358 (APPP…PHPP), 371-388 (APPP…PPPG), and 398-422 (MNHP…PPHH). Residues 426 to 441 (NSLPQFTEDQGTLSPP) are compositionally biased toward polar residues. Pro residues predominate over residues 456 to 477 (PRGPPPPPRLQGPPSQTPLPGP).

This sequence belongs to the Hakai family. Homodimer. Interacts with tyrosine-phosphorylated SRC substrates. Component of the WMM complex, a N6-methyltransferase complex composed of a catalytic subcomplex, named MAC, and of an associated subcomplex, named MACOM. The MAC subcomplex is composed of METTL3 and METTL14. The MACOM subcomplex is composed of WTAP, ZC3H13, CBLL1/HAKAI, VIRMA, and, in some cases of RBM15 (RBM15 or RBM15B). Also a component of a MACOM-like complex, named WTAP complex, composed of WTAP, ZC3H13, CBLL1, VIRMA, RBM15, BCLAF1 and THRAP3. Phosphorylated on tyrosine residues.

The protein resides in the nucleus speckle. Its subcellular location is the nucleus. It is found in the nucleoplasm. It localises to the cytoplasm. The enzyme catalyses S-ubiquitinyl-[E2 ubiquitin-conjugating enzyme]-L-cysteine + [acceptor protein]-L-lysine = [E2 ubiquitin-conjugating enzyme]-L-cysteine + N(6)-ubiquitinyl-[acceptor protein]-L-lysine.. The protein operates within protein modification; protein ubiquitination. Its function is as follows. E3 ubiquitin-protein ligase that mediates ubiquitination of several tyrosine-phosphorylated Src substrates, including CDH1, CTTN and DOK1. Targets CDH1 for endocytosis and degradation. Associated component of the WMM complex, a complex that mediates N6-methyladenosine (m6A) methylation of RNAs, a modification that plays a role in the efficiency of mRNA splicing and RNA processing. Its function in the WMM complex is unknown. The protein is E3 ubiquitin-protein ligase Hakai of Macaca fascicularis (Crab-eating macaque).